Reading from the N-terminus, the 219-residue chain is Proteasome subunit beta type-9 (219 aa).

The propeptide at 1-20 is removed in mature form; the sequence is MLQAGAPTAGSFRTGEVHTG. The active-site Nucleophile is Thr21. N6-acetyllysine occurs at positions 53 and 109.

It belongs to the peptidase T1B family. The 26S proteasome consists of a 20S proteasome core and two 19S regulatory subunits. The 20S proteasome core is composed of 28 subunits that are arranged in four stacked rings, resulting in a barrel-shaped structure. The two end rings are each formed by seven alpha subunits, and the two central rings are each formed by seven beta subunits. The catalytic chamber with the active sites is on the inside of the barrel. Component of the immunoproteasome, where it displaces the equivalent housekeeping subunit PSMB6. Component of the spermatoproteasome, a form of the proteasome specifically found in testis. Interacts with NCOA2 and NCOA3. Autocleaved. The resulting N-terminal Thr residue of the mature subunit is responsible for the nucleophile proteolytic activity. Detected in the cytoplasmic lobe of elongated spermatids, in residual bodies, and in the acrosomal cap of round spermatids.

The protein localises to the cytoplasm. Its subcellular location is the nucleus. The enzyme catalyses Cleavage of peptide bonds with very broad specificity.. Its function is as follows. The proteasome is a multicatalytic proteinase complex which is characterized by its ability to cleave peptides with Arg, Phe, Tyr, Leu, and Glu adjacent to the leaving group at neutral or slightly basic pH. The proteasome has an ATP-dependent proteolytic activity. This subunit is involved in antigen processing to generate class I binding peptides. This Rattus norvegicus (Rat) protein is Proteasome subunit beta type-9 (Psmb9).